The following is a 360-amino-acid chain: Peptide chain release factor 1 (360 aa).

Gln-235 bears the N5-methylglutamine mark. Positions 285–295 (RQAAEQTDMRR) are enriched in basic and acidic residues. The tract at residues 285–309 (RQAAEQTDMRRNLLGSGDRSDKIRT) is disordered.

This sequence belongs to the prokaryotic/mitochondrial release factor family. In terms of processing, methylated by PrmC. Methylation increases the termination efficiency of RF1.

It localises to the cytoplasm. Functionally, peptide chain release factor 1 directs the termination of translation in response to the peptide chain termination codons UAG and UAA. The polypeptide is Peptide chain release factor 1 (prfA) (Haemophilus influenzae (strain ATCC 51907 / DSM 11121 / KW20 / Rd)).